The primary structure comprises 731 residues: Actin filament-associated protein 1 (731 aa).

Methionine 1 is subject to N-acetylmethionine. The tract at residues 56-90 (NNLPAPPQMPLPEIPQPWLPPDSGPPPLPTSSLPE) is disordered. Over residues 59 to 84 (PAPPQMPLPEIPQPWLPPDSGPPPLP) the composition is skewed to pro residues. Positions 70 to 73 (PQPW) match the SH3-binding motif. The SH2-binding 1 motif lies at 93-96 (YEEA). The segment at 118 to 139 (SSSYESYDEEEEDGKGKKTRHQ) is disordered. Residues 152–248 (DAKICAFLLR…WLKVIKEAYS (97 aa)) enclose the PH 1 domain. Residues 252-318 (GPVDPECSPP…SKSEAKGTVS (67 aa)) form a disordered region. The segment covering 271–284 (AELEKKLSSERPSS) has biased composition (basic and acidic residues). Phosphoserine is present on residues serine 283 and serine 284. The PH 2 domain maps to 348-442 (DVPTCGYLNV…WIGILLAETG (95 aa)). The SH2-binding 2 signature appears at 452 to 457 (YDYIDV). The tract at residues 513–544 (KNKKPPASSNGVPVKGKAPSSQQKKVETAGGV) is disordered. Position 549 is a phosphoserine (serine 549). A coiled-coil region spans residues 558–649 (KNRVEADAKR…VKESLKKALA (92 aa)). An interaction with F-actin region spans residues 595 to 638 (DLRAAIEVNAGRKTQAALEDKLKRLEEECKQREAERVSLELELT). The disordered stretch occupies residues 658–731 (IEPRSGTSSP…AKEWELKNGT (74 aa)). Phosphoserine occurs at positions 665, 666, and 669. Threonine 676 is subject to Phosphothreonine. The segment covering 678–687 (ENSPISSCDT) has biased composition (polar residues). A phosphoserine mark is found at serine 680 and serine 688. A compositionally biased stretch (basic and acidic residues) spans 721–731 (KAKEWELKNGT).

In terms of assembly, monomer and homomultimer. Interacts via its C-terminus with F-actin; probably involving AFAP1 multimers. Interacts with activated SRC SH3-SH2 domains. Interacts via its PH 1 domain with PRKCA, PRKCB and PRKCI. Phosphorylated on tyrosine residues by SRC.

The protein localises to the cytoplasm. It localises to the cytoskeleton. The protein resides in the stress fiber. Functionally, can cross-link actin filaments into both network and bundle structures. May modulate changes in actin filament integrity and induce lamellipodia formation. May function as an adapter molecule that links other proteins, such as SRC and PKC to the actin cytoskeleton. This Mus musculus (Mouse) protein is Actin filament-associated protein 1 (Afap1).